The primary structure comprises 227 residues: ATP-dependent dethiobiotin synthetase BioD (227 aa).

13–18 is an ATP binding site; that stretch reads DVGKTV. Residue Thr-17 coordinates Mg(2+). The active site involves Lys-38. ATP-binding positions include Asp-55, 116–119, 176–177, and 205–207; these read EGAG, NR, and PYI. Residues Asp-55 and Glu-116 each coordinate Mg(2+).

It belongs to the dethiobiotin synthetase family. In terms of assembly, homodimer. Mg(2+) serves as cofactor.

It localises to the cytoplasm. The catalysed reaction is (7R,8S)-7,8-diammoniononanoate + CO2 + ATP = (4R,5S)-dethiobiotin + ADP + phosphate + 3 H(+). Its pathway is cofactor biosynthesis; biotin biosynthesis; biotin from 7,8-diaminononanoate: step 1/2. In terms of biological role, catalyzes a mechanistically unusual reaction, the ATP-dependent insertion of CO2 between the N7 and N8 nitrogen atoms of 7,8-diaminopelargonic acid (DAPA, also called 7,8-diammoniononanoate) to form a ureido ring. The sequence is that of ATP-dependent dethiobiotin synthetase BioD from Vibrio vulnificus (strain CMCP6).